Consider the following 269-residue polypeptide: Glutamate racemase (269 aa).

Substrate is bound by residues 7 to 8 and 39 to 40; these read DS and YG. The Proton donor/acceptor role is filled by C70. 71–72 is a binding site for substrate; sequence NT. C194 (proton donor/acceptor) is an active-site residue. 195-196 serves as a coordination point for substrate; it reads TH.

It belongs to the aspartate/glutamate racemases family.

It carries out the reaction L-glutamate = D-glutamate. It participates in cell wall biogenesis; peptidoglycan biosynthesis. Provides the (R)-glutamate required for cell wall biosynthesis. This chain is Glutamate racemase, found in Ruegeria sp. (strain TM1040) (Silicibacter sp.).